The primary structure comprises 324 residues: Phospho-N-acetylmuramoyl-pentapeptide-transferase (324 aa).

The next 10 membrane-spanning stretches (helical) occupy residues 5 to 25 (VILF…PIFI), 55 to 75 (GGLM…DIFF), 81 to 101 (TYML…DDFI), 122 to 142 (LIAL…VVSI), 147 to 167 (VSLD…VGGS), 176 to 196 (LDGL…VLAW), 203 to 223 (VAIF…FNAH), 227 to 247 (VFMG…IAIL), 250 to 270 (LEIL…SVII), and 302 to 322 (VVVT…YIEV).

Belongs to the glycosyltransferase 4 family. MraY subfamily. Requires Mg(2+) as cofactor.

Its subcellular location is the cell membrane. The enzyme catalyses UDP-N-acetyl-alpha-D-muramoyl-L-alanyl-gamma-D-glutamyl-meso-2,6-diaminopimeloyl-D-alanyl-D-alanine + di-trans,octa-cis-undecaprenyl phosphate = di-trans,octa-cis-undecaprenyl diphospho-N-acetyl-alpha-D-muramoyl-L-alanyl-D-glutamyl-meso-2,6-diaminopimeloyl-D-alanyl-D-alanine + UMP. It participates in cell wall biogenesis; peptidoglycan biosynthesis. Its function is as follows. Catalyzes the initial step of the lipid cycle reactions in the biosynthesis of the cell wall peptidoglycan: transfers peptidoglycan precursor phospho-MurNAc-pentapeptide from UDP-MurNAc-pentapeptide onto the lipid carrier undecaprenyl phosphate, yielding undecaprenyl-pyrophosphoryl-MurNAc-pentapeptide, known as lipid I. The protein is Phospho-N-acetylmuramoyl-pentapeptide-transferase of Anoxybacillus flavithermus (strain DSM 21510 / WK1).